A 91-amino-acid polypeptide reads, in one-letter code: Small ribosomal subunit protein uS19 (91 aa).

This sequence belongs to the universal ribosomal protein uS19 family.

Functionally, protein S19 forms a complex with S13 that binds strongly to the 16S ribosomal RNA. The protein is Small ribosomal subunit protein uS19 of Exiguobacterium sp. (strain ATCC BAA-1283 / AT1b).